A 353-amino-acid chain; its full sequence is GTPase Obg (353 aa).

An Obg domain is found at 1 to 159; the sequence is MRFVDEVVIN…RVIRLELKLL (159 aa). In terms of domain architecture, OBG-type G spans 160 to 334; the sequence is ADVGLLGMPN…LCTAIMQELT (175 aa). Residues 166 to 173, 191 to 195, 213 to 216, 284 to 287, and 315 to 317 contribute to the GTP site; these read GMPNAGKS, FTTLH, DIPG, NKMD, and SAA. Residues serine 173 and threonine 193 each contribute to the Mg(2+) site.

Belongs to the TRAFAC class OBG-HflX-like GTPase superfamily. OBG GTPase family. In terms of assembly, monomer. The cofactor is Mg(2+).

It localises to the cytoplasm. Its function is as follows. An essential GTPase which binds GTP, GDP and possibly (p)ppGpp with moderate affinity, with high nucleotide exchange rates and a fairly low GTP hydrolysis rate. Plays a role in control of the cell cycle, stress response, ribosome biogenesis and in those bacteria that undergo differentiation, in morphogenesis control. The protein is GTPase Obg of Dichelobacter nodosus (strain VCS1703A).